Consider the following 692-residue polypeptide: Elongation factor G (692 aa).

Residues 8–282 (ENTRNIGIMA…GVVDYLPSPV (275 aa)) enclose the tr-type G domain. Residues 17–24 (AHIDAGKT), 81–85 (DTPGH), and 135–138 (NKMD) each bind GTP.

Belongs to the TRAFAC class translation factor GTPase superfamily. Classic translation factor GTPase family. EF-G/EF-2 subfamily.

The protein localises to the cytoplasm. Its function is as follows. Catalyzes the GTP-dependent ribosomal translocation step during translation elongation. During this step, the ribosome changes from the pre-translocational (PRE) to the post-translocational (POST) state as the newly formed A-site-bound peptidyl-tRNA and P-site-bound deacylated tRNA move to the P and E sites, respectively. Catalyzes the coordinated movement of the two tRNA molecules, the mRNA and conformational changes in the ribosome. The polypeptide is Elongation factor G (Geobacillus sp. (strain WCH70)).